The sequence spans 193 residues: Ion-translocating oxidoreductase complex subunit A (193 aa).

6 consecutive transmembrane segments (helical) span residues 4–24, 38–58, 65–85, 102–122, 134–154, and 171–191; these read LALI…KFLG, AMGM…CSYL, APLG…AVVV, VLGI…VALL, AVYG…FAAL, and SVAL…AGLV.

This sequence belongs to the NqrDE/RnfAE family. In terms of assembly, the complex is composed of six subunits: RnfA, RnfB, RnfC, RnfD, RnfE and RnfG.

It is found in the cell inner membrane. Functionally, part of a membrane-bound complex that couples electron transfer with translocation of ions across the membrane. The sequence is that of Ion-translocating oxidoreductase complex subunit A from Alkalilimnicola ehrlichii (strain ATCC BAA-1101 / DSM 17681 / MLHE-1).